We begin with the raw amino-acid sequence, 431 residues long: Na(+)-translocating NADH-quinone reductase subunit F (431 aa).

A helical membrane pass occupies residues 10–30 (IFIASTAFCALGLLLVAIILL). In terms of domain architecture, 2Fe-2S ferredoxin-type spans 41-133 (CKLRINNDDS…DMNLEIEERY (93 aa)). [2Fe-2S] cluster contacts are provided by C76, C82, C85, and C117. In terms of domain architecture, FAD-binding FR-type spans 136 to 286 (ASSWEGTVVS…SGPYGESFMK (151 aa)). The segment at 289–413 (NRPVIFLIGG…ALHNSSILTL (125 aa)) is catalytic.

This sequence belongs to the NqrF family. Composed of six subunits; NqrA, NqrB, NqrC, NqrD, NqrE and NqrF. Requires [2Fe-2S] cluster as cofactor. It depends on FAD as a cofactor.

The protein localises to the cell inner membrane. The catalysed reaction is a ubiquinone + n Na(+)(in) + NADH + H(+) = a ubiquinol + n Na(+)(out) + NAD(+). Functionally, NQR complex catalyzes the reduction of ubiquinone-1 to ubiquinol by two successive reactions, coupled with the transport of Na(+) ions from the cytoplasm to the periplasm. The first step is catalyzed by NqrF, which accepts electrons from NADH and reduces ubiquinone-1 to ubisemiquinone by a one-electron transfer pathway. In Chlamydia muridarum (strain MoPn / Nigg), this protein is Na(+)-translocating NADH-quinone reductase subunit F.